A 188-amino-acid polypeptide reads, in one-letter code: Elongation factor P (188 aa).

Lys34 is subject to N6-(3,6-diaminohexanoyl)-5-hydroxylysine.

It belongs to the elongation factor P family. In terms of processing, may be beta-lysylated on the epsilon-amino group of Lys-34 by the combined action of EpmA and EpmB, and then hydroxylated on the C5 position of the same residue by EpmC (if this protein is present). Lysylation is critical for the stimulatory effect of EF-P on peptide-bond formation. The lysylation moiety may extend toward the peptidyltransferase center and stabilize the terminal 3-CCA end of the tRNA. Hydroxylation of the C5 position on Lys-34 may allow additional potential stabilizing hydrogen-bond interactions with the P-tRNA.

The protein resides in the cytoplasm. It participates in protein biosynthesis; polypeptide chain elongation. In terms of biological role, involved in peptide bond synthesis. Alleviates ribosome stalling that occurs when 3 or more consecutive Pro residues or the sequence PPG is present in a protein, possibly by augmenting the peptidyl transferase activity of the ribosome. Modification of Lys-34 is required for alleviation. The polypeptide is Elongation factor P (Coxiella burnetii (strain CbuG_Q212) (Coxiella burnetii (strain Q212))).